The chain runs to 363 residues: Histidine biosynthesis bifunctional protein HisB (363 aa).

The segment at 1–174 (MTQPTLFIDR…AVTNIGDRQP (174 aa)) is histidinol-phosphatase. The active-site Nucleophile is Asp-9. Mg(2+)-binding residues include Asp-9 and Asp-11. Asp-11 (proton donor) is an active-site residue. Cys-92, His-94, Cys-100, and Cys-102 together coordinate Zn(2+). Asp-129 is a Mg(2+) binding site. The segment at 175–363 (RYAEVVRKTK…NELPSSKGVL (189 aa)) is imidazoleglycerol-phosphate dehydratase.

This sequence in the N-terminal section; belongs to the histidinol-phosphatase family. It in the C-terminal section; belongs to the imidazoleglycerol-phosphate dehydratase family. Requires Mg(2+) as cofactor. It depends on Zn(2+) as a cofactor.

It localises to the cytoplasm. The catalysed reaction is D-erythro-1-(imidazol-4-yl)glycerol 3-phosphate = 3-(imidazol-4-yl)-2-oxopropyl phosphate + H2O. The enzyme catalyses L-histidinol phosphate + H2O = L-histidinol + phosphate. It participates in amino-acid biosynthesis; L-histidine biosynthesis; L-histidine from 5-phospho-alpha-D-ribose 1-diphosphate: step 6/9. It functions in the pathway amino-acid biosynthesis; L-histidine biosynthesis; L-histidine from 5-phospho-alpha-D-ribose 1-diphosphate: step 8/9. The polypeptide is Histidine biosynthesis bifunctional protein HisB (Actinobacillus pleuropneumoniae serotype 5b (strain L20)).